A 1116-amino-acid chain; its full sequence is Large proline-rich protein bag6-B (1116 aa).

The region spanning 7–82 (MDVTVKTLDS…HLVERAPPQT (76 aa)) is the Ubiquitin-like domain. Disordered stretches follow at residues 76–114 (ERAPPQTQTSTSGPSTSSSTSPSSSNAAPVPGAPERNGN), 170–221 (EGQP…PSEY), 329–385 (STTG…HPHP), 473–502 (PAAPSFNFQPGAAATTPPAPGGATTTAPGA), 533–589 (GGSS…GTDQ), 640–678 (VPVSTSPPQSASQAPPPPSSPAPPAHSAPPPAAAPESLP), and 1058–1080 (TGAKPESSTECVKRELDNSEAQG). Residues 79–100 (PPQTQTSTSGPSTSSSTSPSSS) are compositionally biased toward low complexity. Over residues 194-207 (RETLPQTTQNADGQ) the composition is skewed to polar residues. Low complexity predominate over residues 208–219 (SNSTPTSHPSPS). Residues 344–353 (GNATPSTNTS) show a composition bias toward polar residues. 3 stretches are compositionally biased toward low complexity: residues 482–502 (PGAAATTPPAPGGATTTAPGA), 535–580 (SSTS…SVPS), and 641–652 (PVSTSPPQSASQ). The segment covering 653 to 672 (APPPPSSPAPPAHSAPPPAA) has biased composition (pro residues). Positions 1068 to 1080 (CVKRELDNSEAQG) are enriched in basic and acidic residues.

As to quaternary structure, component of the bag6/bat3 complex.

The protein resides in the cytoplasm. It localises to the cytosol. Its subcellular location is the nucleus. It is found in the secreted. The protein localises to the extracellular exosome. ATP-independent molecular chaperone preventing the aggregation of misfolded and hydrophobic patches-containing proteins. Functions as part of a cytosolic protein quality control complex, the bag6/bat3 complex, which maintains these client proteins in a soluble state and participates in their proper delivery to the endoplasmic reticulum or alternatively can promote their sorting to the proteasome where they undergo degradation. The bag6/bat3 complex is involved in the post-translational delivery of tail-anchored/type II transmembrane proteins to the endoplasmic reticulum membrane. Similarly, the bag6/bat3 complex also functions as a sorting platform for proteins of the secretory pathway that are mislocalized to the cytosol either delivering them to the proteasome for degradation or to the endoplasmic reticulum. The bag6/bat3 complex also plays a role in the endoplasmic reticulum-associated degradation (ERAD), a quality control mechanism that eliminates unwanted proteins of the endoplasmic reticulum through their retrotranslocation to the cytosol and their targeting to the proteasome. It maintains these retrotranslocated proteins in an unfolded yet soluble state condition in the cytosol to ensure their proper delivery to the proteasome. Also required for selective ubiquitin-mediated degradation of defective nascent chain polypeptides by the proteasome. Also involved in endoplasmic reticulum stress-induced pre-emptive quality control, a mechanism that selectively attenuates the translocation of newly synthesized proteins into the endoplasmic reticulum and reroutes them to the cytosol for proteasomal degradation. May ensure the proper degradation of these proteins and thereby protects the endoplasmic reticulum from protein overload upon stress. By stabilizing a large spectrum of proteins, may indirectly affect different biological processes including apoptosis. By controlling the steady-state expression of the IGF1R receptor, indirectly regulates the insulin-like growth factor receptor signaling pathway. Functionally, when nuclear, may also act as a component of some chromatin regulator complex. The polypeptide is Large proline-rich protein bag6-B (Xenopus laevis (African clawed frog)).